A 277-amino-acid polypeptide reads, in one-letter code: Type IV methyl-directed restriction enzyme EcoKMcrA (277 aa).

An HNH domain is found at 207 to 257 (CENCGKNAPFYLNDGNPYLEVHHVIPLSSGGADTTDNCVALCPNCHRELHY).

Functionally, restriction of 5-methyl and 5-hydroxymethylcytosines at the specific DNA sequence 5'-C(me)CGG-3'. This is Type IV methyl-directed restriction enzyme EcoKMcrA from Escherichia coli (strain K12).